A 432-amino-acid chain; its full sequence is Bifunctional protein GlmU (432 aa).

Residues 1-224 (MSEISVIILA…EENFMGINDK (224 aa)) are pyrophosphorylase. UDP-N-acetyl-alpha-D-glucosamine is bound by residues 9–12 (LAAG), Lys-23, and 82–83 (GT). Mg(2+) is bound at residue Asp-103. Residues Gly-136, Glu-150, Asn-165, and Asn-222 each coordinate UDP-N-acetyl-alpha-D-glucosamine. Asn-222 provides a ligand contact to Mg(2+). Residues 225-245 (FALSKAETIIQNEIKENLMKN) are linker. Positions 246–432 (GVLMRLPESI…FFAKFFKEIK (187 aa)) are N-acetyltransferase. Residues Arg-309 and Lys-326 each coordinate UDP-N-acetyl-alpha-D-glucosamine. His-337 functions as the Proton acceptor in the catalytic mechanism. UDP-N-acetyl-alpha-D-glucosamine-binding residues include Tyr-340 and Asn-351. Residues 360–361 (NY), Ser-379, Ala-397, and Arg-414 each bind acetyl-CoA.

This sequence in the N-terminal section; belongs to the N-acetylglucosamine-1-phosphate uridyltransferase family. In the C-terminal section; belongs to the transferase hexapeptide repeat family. Homotrimer. Mg(2+) is required as a cofactor.

It localises to the cytoplasm. It carries out the reaction alpha-D-glucosamine 1-phosphate + acetyl-CoA = N-acetyl-alpha-D-glucosamine 1-phosphate + CoA + H(+). It catalyses the reaction N-acetyl-alpha-D-glucosamine 1-phosphate + UTP + H(+) = UDP-N-acetyl-alpha-D-glucosamine + diphosphate. The protein operates within nucleotide-sugar biosynthesis; UDP-N-acetyl-alpha-D-glucosamine biosynthesis; N-acetyl-alpha-D-glucosamine 1-phosphate from alpha-D-glucosamine 6-phosphate (route II): step 2/2. Its pathway is nucleotide-sugar biosynthesis; UDP-N-acetyl-alpha-D-glucosamine biosynthesis; UDP-N-acetyl-alpha-D-glucosamine from N-acetyl-alpha-D-glucosamine 1-phosphate: step 1/1. It functions in the pathway bacterial outer membrane biogenesis; LPS lipid A biosynthesis. Functionally, catalyzes the last two sequential reactions in the de novo biosynthetic pathway for UDP-N-acetylglucosamine (UDP-GlcNAc). The C-terminal domain catalyzes the transfer of acetyl group from acetyl coenzyme A to glucosamine-1-phosphate (GlcN-1-P) to produce N-acetylglucosamine-1-phosphate (GlcNAc-1-P), which is converted into UDP-GlcNAc by the transfer of uridine 5-monophosphate (from uridine 5-triphosphate), a reaction catalyzed by the N-terminal domain. The protein is Bifunctional protein GlmU of Campylobacter hominis (strain ATCC BAA-381 / DSM 21671 / CCUG 45161 / LMG 19568 / NCTC 13146 / CH001A).